Consider the following 156-residue polypeptide: Small ribosomal subunit protein bS18c (156 aa).

The disordered stretch occupies residues 1–54; it reads MYTSKQPFLKSKQPFRKSKQPFRKSKQPFRKFKKPFRKSKQPFRRRPRIGPGDR. Positions 13–48 are enriched in basic residues; the sequence is QPFRKSKQPFRKSKQPFRKFKKPFRKSKQPFRRRPR.

Belongs to the bacterial ribosomal protein bS18 family. In terms of assembly, part of the 30S ribosomal subunit.

The protein resides in the plastid. Its subcellular location is the chloroplast. The chain is Small ribosomal subunit protein bS18c from Lolium perenne (Perennial ryegrass).